Consider the following 2617-residue polypeptide: Ubiquitin carboxyl-terminal hydrolase 24 (2617 aa).

The region spanning serine 3–glutamate 44 is the UBA domain. The interval arginine 45–histidine 99 is disordered. Serine 62 and serine 85 each carry phosphoserine. Over residues proline 65–phenylalanine 92 the composition is skewed to gly residues. Tyrosine 939 bears the Phosphotyrosine mark. 2 disordered regions span residues lysine 1030–phenylalanine 1056 and leucine 1127–glutamine 1148. Composition is skewed to low complexity over residues threonine 1031 to phenylalanine 1056 and leucine 1128 to glutamine 1148. Residues serine 1138 and serine 1282 each carry the phosphoserine modification. In terms of domain architecture, USP spans valine 1686–valine 2039. Cysteine 1695 acts as the Nucleophile in catalysis. The interval glutamine 1920 to arginine 1942 is disordered. The residue at position 1940 (serine 1940) is a Phosphoserine. The active-site Proton acceptor is histidine 1967. Phosphoserine is present on residues serine 2044, serine 2074, and serine 2558. The tract at residues alanine 2060–aspartate 2087 is disordered. The span at serine 2066 to proline 2079 shows a compositional bias: low complexity. Threonine 2562 carries the post-translational modification Phosphothreonine. A disordered region spans residues glutamate 2572 to proline 2617. Residues serine 2576–glutamate 2589 are compositionally biased toward low complexity. Serine 2601 carries the post-translational modification Phosphoserine. Residues leucine 2608–proline 2617 are compositionally biased toward basic and acidic residues.

It belongs to the peptidase C19 family.

It carries out the reaction Thiol-dependent hydrolysis of ester, thioester, amide, peptide and isopeptide bonds formed by the C-terminal Gly of ubiquitin (a 76-residue protein attached to proteins as an intracellular targeting signal).. Functionally, protease that can remove conjugated ubiquitin from target proteins and polyubiquitin chains. Deubiquitinates DDB2, preventing its proteasomal degradation. The chain is Ubiquitin carboxyl-terminal hydrolase 24 (Usp24) from Mus musculus (Mouse).